The primary structure comprises 427 residues: Enolase (427 aa).

Residue Gln163 coordinates (2R)-2-phosphoglycerate. Residue Glu205 is the Proton donor of the active site. Mg(2+) is bound by residues Asp242, Glu285, and Asp312. Positions 337, 366, 367, and 388 each coordinate (2R)-2-phosphoglycerate. Lys337 (proton acceptor) is an active-site residue.

Belongs to the enolase family. Mg(2+) serves as cofactor.

It is found in the cytoplasm. It localises to the secreted. Its subcellular location is the cell surface. It carries out the reaction (2R)-2-phosphoglycerate = phosphoenolpyruvate + H2O. It functions in the pathway carbohydrate degradation; glycolysis; pyruvate from D-glyceraldehyde 3-phosphate: step 4/5. Its function is as follows. Catalyzes the reversible conversion of 2-phosphoglycerate (2-PG) into phosphoenolpyruvate (PEP). It is essential for the degradation of carbohydrates via glycolysis. This Albidiferax ferrireducens (strain ATCC BAA-621 / DSM 15236 / T118) (Rhodoferax ferrireducens) protein is Enolase.